The primary structure comprises 214 residues: Chaperone protein TorD (214 aa).

It belongs to the TorD/DmsD family. TorD subfamily.

The protein resides in the cytoplasm. Involved in the biogenesis of TorA. Acts on TorA before the insertion of the molybdenum cofactor and, as a result, probably favors a conformation of the apoenzyme that is competent for acquiring the cofactor. This chain is Chaperone protein TorD, found in Aeromonas salmonicida (strain A449).